Reading from the N-terminus, the 539-residue chain is 2-isopropylmalate synthase (539 aa).

A Pyruvate carboxyltransferase domain is found at 8-269 (VLIFDTTLRD…YFNPFFGRPP (262 aa)). Mn(2+)-binding residues include Asp-17, His-208, His-210, and Asn-244. The regulatory domain stretch occupies residues 408–539 (QLKLVQVSCG…DLAKVDKKGI (132 aa)).

Belongs to the alpha-IPM synthase/homocitrate synthase family. LeuA type 1 subfamily. As to quaternary structure, homodimer. Mn(2+) serves as cofactor.

Its subcellular location is the cytoplasm. It catalyses the reaction 3-methyl-2-oxobutanoate + acetyl-CoA + H2O = (2S)-2-isopropylmalate + CoA + H(+). Its pathway is amino-acid biosynthesis; L-leucine biosynthesis; L-leucine from 3-methyl-2-oxobutanoate: step 1/4. Catalyzes the condensation of the acetyl group of acetyl-CoA with 3-methyl-2-oxobutanoate (2-ketoisovalerate) to form 3-carboxy-3-hydroxy-4-methylpentanoate (2-isopropylmalate). The polypeptide is 2-isopropylmalate synthase (Prochlorococcus marinus (strain NATL1A)).